Reading from the N-terminus, the 178-residue chain is Ras-like protein (178 aa).

A GTP-binding site is contributed by 1–6 (GGVGKS). Positions 21–29 (YDPTIEDSY) match the Effector region motif. Residues 46 to 50 (DTAGQ) and 105 to 108 (NKCD) contribute to the GTP site. A Cysteine methyl ester modification is found at Cys175. A lipid anchor (S-geranylgeranyl cysteine) is attached at Cys175. Residues 176–178 (SIL) constitute a propeptide, removed in mature form.

The protein belongs to the small GTPase superfamily. Ras family.

It localises to the cell membrane. It catalyses the reaction GTP + H2O = GDP + phosphate + H(+). Alternates between an inactive form bound to GDP and an active form bound to GTP. Activated by a guanine nucleotide-exchange factor (GEF) and inactivated by a GTPase-activating protein (GAP). In terms of biological role, ras proteins bind GDP/GTP and possess intrinsic GTPase activity. The sequence is that of Ras-like protein from Artemia salina (Brine shrimp).